The following is a 190-amino-acid chain: Xanthine phosphoribosyltransferase (190 aa).

L20 and N27 together coordinate xanthine. Residue 128–132 (ANGHA) coordinates 5-phospho-alpha-D-ribose 1-diphosphate. K156 lines the xanthine pocket.

The protein belongs to the purine/pyrimidine phosphoribosyltransferase family. Xpt subfamily. As to quaternary structure, homodimer.

It localises to the cytoplasm. The enzyme catalyses XMP + diphosphate = xanthine + 5-phospho-alpha-D-ribose 1-diphosphate. The protein operates within purine metabolism; XMP biosynthesis via salvage pathway; XMP from xanthine: step 1/1. Its function is as follows. Converts the preformed base xanthine, a product of nucleic acid breakdown, to xanthosine 5'-monophosphate (XMP), so it can be reused for RNA or DNA synthesis. This Ectopseudomonas mendocina (strain ymp) (Pseudomonas mendocina) protein is Xanthine phosphoribosyltransferase.